Here is a 250-residue protein sequence, read N- to C-terminus: Pre-protein VI (250 aa).

Residues 1 to 33 (MEDINFASLAPRHGSRPFMGNWQDIGTSNMSGG) constitute a propeptide that is removed on maturation. An amphipathic alpha-helix essential for membrane lytic activity region spans residues 34–54 (AFSWGSLWSGIKNFGSTIKNY). Residues 36 to 53 (SWGSLWSGIKNFGSTIKN) form an involved in endosomal membrane lysis region. An interaction with hexon protein region spans residues 48 to 74 (GSTIKNYGSKAWNSSTGQMLRDKLKEQ). Positions 67–76 (LRDKLKEQNF) match the Nuclear export signal motif. The segment at 103-147 (INSKLDPRPPVEEPPPAVETVSPEGRGEKRPRPDREETLVTQIDE) is disordered. Phosphoserine; by host is present on Ser-124. A compositionally biased stretch (basic and acidic residues) spans 127–140 (GRGEKRPRPDREET). A Nuclear localization signal motif is present at residues 131-135 (KRPRP). At Thr-143 the chain carries Phosphothreonine; by host. The short motif at 148–151 (PPSY) is the PPXY motif element. Residues 206–220 (PSRASLRRAASGPRS) are compositionally biased toward low complexity. The tract at residues 206–226 (PSRASLRRAASGPRSMRPVAS) is disordered. Residues 231 to 242 (STLNSIVGLGVQ) carry the Nuclear export signal motif. The tract at residues 233-239 (LNSIVGL) is interaction with hexon protein. Residues 240 to 250 (GVQSLKRRRCF) are binds to importin alpha/beta, involved in hexon nuclear import. The Nuclear localization signal signature appears at 245–248 (KRRR).

The protein belongs to the adenoviridae protein VI family. As to quaternary structure, interacts with hexon protein; this interaction allows nuclear import of hexon trimers and possibly pre-capsid assembly. Interacts (via C-terminal NLS) with importin alpha/beta. In terms of assembly, interacts (via PPxY motif) with host NEDD4 ubiquitine ligase; this interaction might play a role in virus intracellular transport during entry. Part of a complex composed of the core-capsid bridging protein, the endosome lysis protein VI and the hexon-linking protein VIII; these interactions bridge the virus core to the capsid. Interacts with peripentonal hexons; this interaction stabilizes the capsid by gluing two peripentonal hexons together and joining them with an adjacent group-of-nine hexon. Heterodimer with the viral protease; disulfide-linked. Interacts with the viral protease. Post-translationally, ubiquitinated by Nedd4 following partial capsid disassembly; which might play a role in intracellular virus movement during entry. Contains the major nuclear import and export signals. Proteolytically removed during virion maturation. The processing of the C-terminus turns the precursor into a mature viral structural protein and abrogates its ability to promote hexon import and act as a potential chaperone protein.

The protein localises to the host nucleus. Its subcellular location is the host cytoplasm. It localises to the virion. Functionally, during virus assembly, promotes hexon trimers nuclear import through nuclear pore complexes via an importin alpha/beta-dependent mechanism. By analogy to herpesviruses capsid assembly, might act as a chaperone to promote the formation of the icosahedral capsid. Its function is as follows. Structural component of the virion that provides increased stability to the particle shell through its interaction with the core-capsid bridging protein and the hexon-linking protein VIII. Fibers shedding during virus entry into host cell allows the endosome lysis protein to be exposed as a membrane-lytic peptide. Exhibits pH-independent membrane fragmentation activity and probably mediates viral rapid escape from host endosome via organellar membrane lysis. It is not clear if it then remains partially associated with the capsid and involved in the intracellular microtubule-dependent transport of capsid to the nucleus, or if it is lost during endosomal penetration. In terms of biological role, cofactor that activates the viral protease. Binds to viral protease in a 1:1 ratio. This is Pre-protein VI from Human adenovirus C serotype 2 (HAdV-2).